An 84-amino-acid chain; its full sequence is Delta-thalatoxin-Hhe1a (84 aa).

A signal peptide spans 1–19 (MAYQKIVFVALMLVLAVSA). A propeptide spanning residues 20-33 (MRLPDQQDQDISVA) is cleaved from the precursor. Cystine bridges form between Cys38–Cys78, Cys40–Cys68, and Cys61–Cys79.

This sequence belongs to the sea anemone sodium channel inhibitory toxin family. Type II subfamily.

The protein localises to the secreted. It localises to the nematocyst. Functionally, binds specifically to the voltage-gated sodium channel (Nav) and delays its inactivation. The protein is Delta-thalatoxin-Hhe1a of Heterodactyla hemprichii (Hemprich's sea anemone).